The primary structure comprises 242 residues: MSEEERPAALADTILRFLCHDDIDTVKELCADWFPIEYPDSWYRDITSNKKFFSLAATYNGQIVGMIVAEIKGRTKVHKEDGDILASSFSGDTQVAYILSLGVVKEFRKQGIGSLLLESLKSHISSTAQDHCKALYLHVLTTNSNAIRFYENRHFHQHHYLPYYYSIRGVLQDAYTYVLYLNGGHPPWTVMDYLQHLGSALAGFSPCTLPQRIYRQAHTLLRSLLPWSSISAKSGIEYSRTM.

Residues 1 to 192 lie on the Cytoplasmic side of the membrane; that stretch reads MSEEERPAAL…GGHPPWTVMD (192 aa). Positions 13-182 constitute an N-acetyltransferase domain; that stretch reads TILRFLCHDD…DAYTYVLYLN (170 aa). Tyr-38 contacts substrate. The active site involves Tyr-97. Substrate is bound at residue Leu-99. Acetyl-CoA is bound by residues 101–103 and 109–114; these read LGV and KQGIGS. His-138 is a catalytic residue. Residues Asn-143 and 150-153 contribute to the acetyl-CoA site; that span reads YENR. The segment at 162–173 is required for homodimerization; sequence PYYYSIRGVLQD. Tyr-165 contributes to the substrate binding site. An intramembrane region (helical) is located at residues 193–236; the sequence is YLQHLGSALAGFSPCTLPQRIYRQAHTLLRSLLPWSSISAKSGI. Topologically, residues 237–242 are cytoplasmic; it reads EYSRTM.

The protein belongs to the acetyltransferase family. NAA60 subfamily. As to quaternary structure, monomer and homodimer; monomer in presence of substrate and homodimer in its absence.

It is found in the golgi apparatus membrane. The catalysed reaction is N-terminal L-methionyl-[transmembrane protein] + acetyl-CoA = N-terminal N(alpha)-acetyl-L-methionyl-[transmembrane protein] + CoA + H(+). It carries out the reaction L-lysyl-[protein] + acetyl-CoA = N(6)-acetyl-L-lysyl-[protein] + CoA + H(+). In terms of biological role, N-alpha-acetyltransferase that specifically mediates the acetylation of N-terminal residues of the transmembrane proteins, with a strong preference for N-termini facing the cytosol. Displays N-terminal acetyltransferase activity towards a range of N-terminal sequences including those starting with Met-Lys, Met-Val, Met-Ala and Met-Met. Required for normal chromosomal segregation during anaphase. May also show histone acetyltransferase activity; such results are however unclear in vivo and would require additional experimental evidences. This chain is N-alpha-acetyltransferase 60 (naa60), found in Xenopus tropicalis (Western clawed frog).